A 233-amino-acid polypeptide reads, in one-letter code: Hydroxyacylglutathione hydrolase (233 aa).

7 residues coordinate Zn(2+): His52, His54, Asp56, His57, His108, Asp125, and His163.

Belongs to the metallo-beta-lactamase superfamily. Glyoxalase II family. As to quaternary structure, monomer. Zn(2+) serves as cofactor.

It catalyses the reaction an S-(2-hydroxyacyl)glutathione + H2O = a 2-hydroxy carboxylate + glutathione + H(+). It functions in the pathway secondary metabolite metabolism; methylglyoxal degradation; (R)-lactate from methylglyoxal: step 2/2. Its function is as follows. Thiolesterase that catalyzes the hydrolysis of S-D-lactoyl-glutathione to form glutathione and D-lactic acid. This chain is Hydroxyacylglutathione hydrolase, found in Pasteurella multocida (strain Pm70).